Consider the following 251-residue polypeptide: Probable transcriptional regulatory protein TGRD_462 (251 aa).

It belongs to the TACO1 family.

The protein resides in the cytoplasm. The chain is Probable transcriptional regulatory protein TGRD_462 from Endomicrobium trichonymphae.